A 332-amino-acid chain; its full sequence is MTENNEETIVPDEQCNLTSSTPMKSSDLENVESPIERKISIVECDGEGNPPIESSEETPPDLTSHSVAPRRRRSPRRPEVSASRLPLKVLNQIFQYLSLKDLRSAMLTCHSWNNALSMEDSDIWQQLLVQKLPEAAHSDPFLFVELRSARKKLRAWYFAWNTNDISRNNYIRTNGFTVHRQPVAQSTDGVRGKRGVSQGVHAFDITWDGPLGTVAVVGFATKHAALHCVGYIALLGSDDQSWGWNLVDNVLMHNGVQLGVYPKMNNPPKYEVGEKIRLVIDCDMHVAYFERNSEFLGIAFSHIPPLRLFPAVCAVYGNTEVTMVYVGSPQMG.

Residues 1 to 10 (MTENNEETIV) show a composition bias toward acidic residues. Residues 1–81 (MTENNEETIV…RRSPRRPEVS (81 aa)) form a disordered region. Polar residues predominate over residues 15 to 24 (CNLTSSTPMK). The F-box domain occupies 79–127 (EVSASRLPLKVLNQIFQYLSLKDLRSAMLTCHSWNNALSMEDSDIWQQL). The B30.2/SPRY domain maps to 138 to 330 (SDPFLFVELR…VTMVYVGSPQ (193 aa)).

It belongs to the FBXO45/Fsn family. As to quaternary structure, component of an SCF (SKP1-CUL1-F-box protein) E3 ubiquitin ligase complex composed of cul-1, fsn-1, rpm-1 and skr-1. Interacts (via SPRY domain) with scd-2 (via cytoplasmic domain). Interacts (via SPRY domain) with convertase egl-3 (via C-terminus).

The protein resides in the synapse. It participates in protein modification; protein ubiquitination. Functionally, component of a SCF (SKP1-CUL1-F-box protein) E3 ubiquitin ligase complex which is required for the restriction and/or maturation of synapses in GABAergic neuromuscular junction (NMJ) presynaptic neurons. Promotes NRJ synapse development and synaptic transmission by negatively regulating the daf-2/InsR pathway in muscles. By targeting convertase egl-3 for degradation, negatively modulates insulin-like protein ins-4 and ins-6 processing. May stabilize synapse formation by promoting the down-regulation of scd-2. Regulates axon termination in PLM and ALM neurons. The protein is F-box/SPRY domain-containing protein 1 (fsn-1) of Caenorhabditis briggsae.